Consider the following 444-residue polypeptide: N-succinylarginine dihydrolase (444 aa).

Residues 19–28 (AGLSFGNVAS), asparagine 110, and 137–138 (HR) contribute to the substrate site. Residue glutamate 174 is part of the active site. Arginine 214 is a substrate binding site. Histidine 250 is an active-site residue. Positions 252 and 362 each coordinate substrate. The Nucleophile role is filled by cysteine 368.

The protein belongs to the succinylarginine dihydrolase family. In terms of assembly, homodimer.

It catalyses the reaction N(2)-succinyl-L-arginine + 2 H2O + 2 H(+) = N(2)-succinyl-L-ornithine + 2 NH4(+) + CO2. It functions in the pathway amino-acid degradation; L-arginine degradation via AST pathway; L-glutamate and succinate from L-arginine: step 2/5. Functionally, catalyzes the hydrolysis of N(2)-succinylarginine into N(2)-succinylornithine, ammonia and CO(2). In Shewanella putrefaciens (strain CN-32 / ATCC BAA-453), this protein is N-succinylarginine dihydrolase.